The primary structure comprises 62 residues: Protein YnfQ (62 aa).

This sequence belongs to the YmcF/YnqF peptide family.

This Escherichia coli (strain K12) protein is Protein YnfQ.